A 509-amino-acid chain; its full sequence is Kelch repeat protein M-T9 (509 aa).

One can recognise a BTB domain in the interval 15–79 (SDVTVVAGDS…MYAGCDGLND (65 aa)). Kelch repeat units follow at residues 274 to 320 (VLYC…IVNG), 321 to 368 (YIYV…YRNE), 370 to 415 (WIVG…VYNN), 416 to 463 (RLYC…VYNK), and 465 to 509 (IYVL…NDEI).

It belongs to the poxviruses Kelch family.

The sequence is that of Kelch repeat protein M-T9 from Myxoma virus (strain Lausanne) (MYXV).